Here is a 209-residue protein sequence, read N- to C-terminus: Max dimerization protein 4 (209 aa).

An interaction with SIN3A and SIN3B region spans residues 6-23; it reads LLLLLEAAEYLERRDREA. Residues 53 to 105 enclose the bHLH domain; it reads NNRSSHNELEKHRRAKLRLYLEQLKQLGPLGPDSTRHTTLSLLKRAKMHIKKL. The disordered stretch occupies residues 137–209; that stretch reads SVERVRTDST…CRRPGCPGLS (73 aa). Positions 153–163 are enriched in acidic residues; the sequence is DDSEQEVDIEG. Over residues 185-195 the composition is skewed to polar residues; the sequence is SLQSSGCSDSS.

As to quaternary structure, efficient DNA binding requires dimerization with another bHLH protein. Binds DNA as a heterodimer with MAX. Interacts with SIN3A AND SIN3B. Interacts with RNF17.

Its subcellular location is the nucleus. Functionally, transcriptional repressor. Binds with MAX to form a sequence-specific DNA-binding protein complex which recognizes the core sequence 5'-CAC[GA]TG-3'. Antagonizes MYC transcriptional activity by competing for MAX and suppresses MYC dependent cell transformation. This chain is Max dimerization protein 4 (Mxd4), found in Mus musculus (Mouse).